Consider the following 140-residue polypeptide: MSITTHLDIVSAEHEIFSGVVELVVATGELGEIGITPGHAPLLTVLRPGEVRITLQGGTQDIYYVQGGMLEVQPHCVTILADVAERAEHLDEAAALAAKAKAEAAIASKGGDIDYSVAAAELARAVAQIRAIQKTRKKMK.

The protein belongs to the ATPase epsilon chain family. In terms of assembly, F-type ATPases have 2 components, CF(1) - the catalytic core - and CF(0) - the membrane proton channel. CF(1) has five subunits: alpha(3), beta(3), gamma(1), delta(1), epsilon(1). CF(0) has three main subunits: a, b and c.

Its subcellular location is the cell inner membrane. Produces ATP from ADP in the presence of a proton gradient across the membrane. The chain is ATP synthase epsilon chain from Legionella pneumophila (strain Lens).